We begin with the raw amino-acid sequence, 305 residues long: LysM and putative peptidoglycan-binding domain-containing protein 3 (305 aa).

The Extracellular segment spans residues 1-216; sequence MAGRNQNRTV…PYYGADWGIG (216 aa). 2 N-linked (GlcNAc...) asparagine glycosylation sites follow: Asn7 and Asn26. Residue Ser55 is modified to Phosphoserine. A LysM domain is found at 65–109; it reads LTKDIQEGDTLNAVALQYCCTVADIKRVNNLISDQDFFALRSIKI. The N-linked (GlcNAc...) asparagine glycan is linked to Asn199. A helical transmembrane segment spans residues 217 to 237; sequence WWTAVVIMLIVGIITPVFYLL. Topologically, residues 238–305 are cytoplasmic; the sequence is YYEILAKVDV…PQAHDAQHKT (68 aa). Residues 253 to 305 form a disordered region; that stretch reads VGSSHLHPGLTPPTQHREMENEIGPTKGIPVGQQDDHKLYRQDPQAHDAQHKT. Residues 286–305 are compositionally biased toward basic and acidic residues; the sequence is QDDHKLYRQDPQAHDAQHKT.

The protein resides in the cell membrane. Its subcellular location is the golgi apparatus. In terms of biological role, essential for Golgi structural integrity. This Mus musculus (Mouse) protein is LysM and putative peptidoglycan-binding domain-containing protein 3 (Lysmd3).